The following is a 443-amino-acid chain: Ribulose bisphosphate carboxylase large chain (443 aa).

Substrate is bound by residues asparagine 89 and threonine 139. Residue lysine 141 is the Proton acceptor of the active site. Lysine 143 provides a ligand contact to substrate. Mg(2+)-binding residues include lysine 167, aspartate 169, and glutamate 170. Lysine 167 carries the N6-carboxylysine modification. Histidine 260 (proton acceptor) is an active-site residue. Arginine 261, histidine 293, and serine 345 together coordinate substrate.

The protein belongs to the RuBisCO large chain family. Type I subfamily. Heterohexadecamer of 8 large chains and 8 small chains; disulfide-linked. The disulfide link is formed within the large subunit homodimers. Requires Mg(2+) as cofactor. The disulfide bond which can form in the large chain dimeric partners within the hexadecamer appears to be associated with oxidative stress and protein turnover.

It localises to the plastid. It is found in the chloroplast. The catalysed reaction is 2 (2R)-3-phosphoglycerate + 2 H(+) = D-ribulose 1,5-bisphosphate + CO2 + H2O. It catalyses the reaction D-ribulose 1,5-bisphosphate + O2 = 2-phosphoglycolate + (2R)-3-phosphoglycerate + 2 H(+). Its function is as follows. RuBisCO catalyzes two reactions: the carboxylation of D-ribulose 1,5-bisphosphate, the primary event in carbon dioxide fixation, as well as the oxidative fragmentation of the pentose substrate in the photorespiration process. Both reactions occur simultaneously and in competition at the same active site. The protein is Ribulose bisphosphate carboxylase large chain of Sesamum indicum (Oriental sesame).